The sequence spans 316 residues: MRELKIFSGRANHDLAEKLCRHLHLKPARITLGQFPDGENYCKLDEDVRGRDVFLVQPTCPPVNDNLIELLTMIDCCKRASAERITAVIPYFGYARQDRKDEGRVPITAKLVANLITRAGADRVLTMDLHAAQIQGFFDVPVDHLYAAPVINDHFVSRRFAGDEVVVVSPDEGSIKRALGHTKRLGGNLAIVDKRRTNALEVRQNTIIGGPVEGKVALMFDDMISTAGSICGAARLVHEAGAKEIHIACTHGVLCGPAIERLREAPIDSITVTDTIPVTGEKLLPNLVQLSVAPLLAEAIKRIHHDQSISELFRER.

Residues 37–39 (DGE) and 96–97 (RQ) each bind ATP. Mg(2+) contacts are provided by His130 and Asp171. Residue Lys194 is part of the active site. D-ribose 5-phosphate contacts are provided by Arg196 and Asp221.

This sequence belongs to the ribose-phosphate pyrophosphokinase family. Class I subfamily. In terms of assembly, homohexamer. Requires Mg(2+) as cofactor.

It is found in the cytoplasm. It carries out the reaction D-ribose 5-phosphate + ATP = 5-phospho-alpha-D-ribose 1-diphosphate + AMP + H(+). The protein operates within metabolic intermediate biosynthesis; 5-phospho-alpha-D-ribose 1-diphosphate biosynthesis; 5-phospho-alpha-D-ribose 1-diphosphate from D-ribose 5-phosphate (route I): step 1/1. Involved in the biosynthesis of the central metabolite phospho-alpha-D-ribosyl-1-pyrophosphate (PRPP) via the transfer of pyrophosphoryl group from ATP to 1-hydroxyl of ribose-5-phosphate (Rib-5-P). This is Ribose-phosphate pyrophosphokinase from Rhodopirellula baltica (strain DSM 10527 / NCIMB 13988 / SH1).